We begin with the raw amino-acid sequence, 224 residues long: MSPAFNASPNQLTLALSKGRIFKETLPLLEAAGIRVMEDPETSRKLILPTSDPAVRVIIVRASDVPTYVQYGAADFGVAGKDVLMEHGMTGLYAPIDLNIARCRMSVAVPAGFDYANAVRQGARLSVATKYVQTAREHFAKKGVHVDLIKLYGSMELGPLVGLSDAIVDLVSTGGTLRANNLVEVEEIVQISSRLVVNQAALKLKRERLTPILDAFEKASAALA.

Belongs to the ATP phosphoribosyltransferase family. Short subfamily. As to quaternary structure, heteromultimer composed of HisG and HisZ subunits.

It localises to the cytoplasm. It carries out the reaction 1-(5-phospho-beta-D-ribosyl)-ATP + diphosphate = 5-phospho-alpha-D-ribose 1-diphosphate + ATP. It participates in amino-acid biosynthesis; L-histidine biosynthesis; L-histidine from 5-phospho-alpha-D-ribose 1-diphosphate: step 1/9. In terms of biological role, catalyzes the condensation of ATP and 5-phosphoribose 1-diphosphate to form N'-(5'-phosphoribosyl)-ATP (PR-ATP). Has a crucial role in the pathway because the rate of histidine biosynthesis seems to be controlled primarily by regulation of HisG enzymatic activity. The chain is ATP phosphoribosyltransferase from Cupriavidus pinatubonensis (strain JMP 134 / LMG 1197) (Cupriavidus necator (strain JMP 134)).